A 489-amino-acid chain; its full sequence is Cytochrome P450 monooxygenase orf5 (489 aa).

The helical transmembrane segment at 13 to 35 (FVRLLAFHLIGLFVSITVYRLFF) threads the bilayer. N-linked (GlcNAc...) asparagine glycosylation is found at N37, N118, N171, and N345. C428 contacts heme.

The protein belongs to the cytochrome P450 family. Heme is required as a cofactor.

Its subcellular location is the membrane. The protein operates within mycotoxin biosynthesis. In terms of biological role, cytochrome P450 monooxygenase; part of the gene cluster that mediates the biosynthesis of brefeldin A (BFA), a protein transport inhibitor that shows antiviral, antifungal, and antitumor properties. The proposed biosynthesis of BFA involves formation of an acyclic polyketide chain that is differentially tailored throughout the backbone. The highly reducing polyketide synthase Bref-PKS is proposed to synthesize the precisely reduced octaketide precursor, which could then be directly offloaded by the thiohydrolase enzyme Bref-TH followed by a cytochrome P450 monooxygenase-mediated formation of the cyclopentane ring and macrocyclization to afford 7-deoxy BFA. Alternatively, the first ring annulation can also occur on the ACP-tethered intermediate before the thiohydrolase release and lactonization. The C7-hydroxylation by another cytochrome P450 monooxygenase is believed to be the final step in the process to obtain the final structure of BFA. In addition to the HRPKS Bref-PKS and the thiohydrolase Bref-TH, the brefeldin A biosynthesis cluster contains 4 cytochrome p450 monooxygenases (called orf3 to orf6), as well a the probable cluster-specific transcription regulator orf8. This chain is Cytochrome P450 monooxygenase orf5, found in Eupenicillium brefeldianum (Penicillium brefeldianum).